Here is a 652-residue protein sequence, read N- to C-terminus: Zinc finger protein 503 (652 aa).

Residues 1 to 11 are compositionally biased toward polar residues; sequence MSTAPSLSALR. The interval 1–72 is disordered; it reads MSTAPSLSAL…HAVPPSDPLR (72 aa). Gly residues predominate over residues 16-32; that stretch reads SGGGGGGGGGGGSGGGS. At Ser107 the chain carries Phosphoserine. 2 disordered regions span residues 126–283 and 296–338; these read SQIG…GVPA and INVD…SSVL. Positions 135–144 are enriched in low complexity; that stretch reads PSSKLSSVAS. Gly residues-rich tracts occupy residues 145–157 and 194–209; these read NGGGAGGAGNGAG and GGGGGGGGGGGGGGGV. N6-acetyllysine is present on Lys213. The span at 221 to 230 shows a compositional bias: polar residues; that stretch reads ATCQPFTPRT. The span at 231 to 244 shows a compositional bias: low complexity; that stretch reads GSPSSSASACSPGG. A phosphoserine mark is found at Ser235 and Ser241. Residues 254–263 are compositionally biased toward basic and acidic residues; sequence EGKDDKKDPE. Positions 264-283 are enriched in gly residues; the sequence is AGGGGSSKGSGGASADGVPA. A compositionally biased stretch (low complexity) spans 314 to 336; that stretch reads GSDCGGSSSSSSGSGPSAPTSSS. The C2H2-type zinc finger occupies 520 to 548; that stretch reads HICNWVSANGPCDKRFATSEELLSHLRTH. An Omega-N-methylarginine modification is found at Arg642.

Belongs to the Elbow/Noc family.

Its subcellular location is the nucleus. Its function is as follows. May function as a transcriptional repressor. The chain is Zinc finger protein 503 (Znf503) from Mus musculus (Mouse).